A 131-amino-acid chain; its full sequence is Protein Turandot M (131 aa).

Positions 1–23 (MNPAIYLSCLVVFSLLLLGKVNA) are cleaved as a signal peptide.

Belongs to the Turandot family.

It localises to the secreted. Its function is as follows. A humoral factor that may play a role in stress tolerance. Requires Mekk1 expression in the fat body to regulate response to septic injury and consequent immune response. In Drosophila erecta (Fruit fly), this protein is Protein Turandot M.